A 296-amino-acid polypeptide reads, in one-letter code: Formamidopyrimidine-DNA glycosylase (296 aa).

The Schiff-base intermediate with DNA role is filled by Pro-2. Glu-3 serves as the catalytic Proton donor. The Proton donor; for beta-elimination activity role is filled by Lys-58. His-104, Arg-126, and Lys-169 together coordinate DNA. The FPG-type zinc-finger motif lies at 260–296 (SVYDRESQACRTPGCGGTVARIVQAGRSTFYCATCQK). The active-site Proton donor; for delta-elimination activity is Arg-286.

The protein belongs to the FPG family. As to quaternary structure, monomer. Requires Zn(2+) as cofactor.

It carries out the reaction Hydrolysis of DNA containing ring-opened 7-methylguanine residues, releasing 2,6-diamino-4-hydroxy-5-(N-methyl)formamidopyrimidine.. The catalysed reaction is 2'-deoxyribonucleotide-(2'-deoxyribose 5'-phosphate)-2'-deoxyribonucleotide-DNA = a 3'-end 2'-deoxyribonucleotide-(2,3-dehydro-2,3-deoxyribose 5'-phosphate)-DNA + a 5'-end 5'-phospho-2'-deoxyribonucleoside-DNA + H(+). In terms of biological role, involved in base excision repair of DNA damaged by oxidation or by mutagenic agents. Acts as a DNA glycosylase that recognizes and removes damaged bases. Has a preference for oxidized purines, such as 7,8-dihydro-8-oxoguanine (8-oxoG). Has AP (apurinic/apyrimidinic) lyase activity and introduces nicks in the DNA strand. Cleaves the DNA backbone by beta-delta elimination to generate a single-strand break at the site of the removed base with both 3'- and 5'-phosphates. This chain is Formamidopyrimidine-DNA glycosylase, found in Rhizobium johnstonii (strain DSM 114642 / LMG 32736 / 3841) (Rhizobium leguminosarum bv. viciae).